Here is an 86-residue protein sequence, read N- to C-terminus: Co-chaperonin GroES (86 aa).

The protein belongs to the GroES chaperonin family. In terms of assembly, heptamer of 7 subunits arranged in a ring. Interacts with the chaperonin GroEL.

The protein resides in the cytoplasm. Functionally, together with the chaperonin GroEL, plays an essential role in assisting protein folding. The GroEL-GroES system forms a nano-cage that allows encapsulation of the non-native substrate proteins and provides a physical environment optimized to promote and accelerate protein folding. GroES binds to the apical surface of the GroEL ring, thereby capping the opening of the GroEL channel. The polypeptide is Co-chaperonin GroES (Campylobacter lari (strain RM2100 / D67 / ATCC BAA-1060)).